Consider the following 117-residue polypeptide: Huntingtin-interacting protein M (117 aa).

Disordered regions lie at residues 1–30 and 71–117; these read MSEK…VPRS and EASN…RKND. Residues 72 to 81 are compositionally biased toward polar residues; that stretch reads ASNNGSMRNT. Residues 82–117 show a composition bias toward basic and acidic residues; that stretch reads SQDREREVDNNREPHSAESDVTRFLFDEMPKSRKND.

As to quaternary structure, may interact with the N-terminus of HD.

The chain is Huntingtin-interacting protein M from Homo sapiens (Human).